The following is a 114-amino-acid chain: FK506-binding protein 1 (114 aa).

Residues Gly26–Asn114 form the PPIase FKBP-type domain.

Belongs to the FKBP-type PPIase family. FKBP1 subfamily.

It localises to the cytoplasm. It carries out the reaction [protein]-peptidylproline (omega=180) = [protein]-peptidylproline (omega=0). Its activity is regulated as follows. Inhibited by both FK506 and rapamycin. Functionally, PPIases accelerate the folding of proteins. It catalyzes the cis-trans isomerization of proline imidic peptide bonds in oligopeptides. The sequence is that of FK506-binding protein 1 (FPR1) from Candida glabrata (strain ATCC 2001 / BCRC 20586 / JCM 3761 / NBRC 0622 / NRRL Y-65 / CBS 138) (Yeast).